Consider the following 428-residue polypeptide: Enolase (428 aa).

Glutamine 163 serves as a coordination point for (2R)-2-phosphoglycerate. Catalysis depends on glutamate 205, which acts as the Proton donor. 3 residues coordinate Mg(2+): aspartate 242, glutamate 283, and aspartate 310. (2R)-2-phosphoglycerate is bound by residues lysine 335, arginine 364, serine 365, and lysine 386. Lysine 335 (proton acceptor) is an active-site residue.

It belongs to the enolase family. Mg(2+) is required as a cofactor.

The protein localises to the cytoplasm. It localises to the secreted. It is found in the cell surface. The catalysed reaction is (2R)-2-phosphoglycerate = phosphoenolpyruvate + H2O. It functions in the pathway carbohydrate degradation; glycolysis; pyruvate from D-glyceraldehyde 3-phosphate: step 4/5. Its function is as follows. Catalyzes the reversible conversion of 2-phosphoglycerate (2-PG) into phosphoenolpyruvate (PEP). It is essential for the degradation of carbohydrates via glycolysis. This chain is Enolase, found in Sulfurihydrogenibium sp. (strain YO3AOP1).